The chain runs to 167 residues: uncharacterized protein (167 aa).

A helical membrane pass occupies residues 5-27 (LILLTFVSFVFSKTFYYDVYVFF).

It localises to the membrane. This is an uncharacterized protein from Aquifex aeolicus (strain VF5).